The following is a 277-amino-acid chain: NADPH-dependent 7-cyano-7-deazaguanine reductase (277 aa).

83–85 (VES) contacts substrate. 85–86 (SK) provides a ligand contact to NADPH. The Thioimide intermediate role is filled by Cys-184. The active-site Proton donor is Asp-191. 223-224 (HE) contributes to the substrate binding site. Position 252–253 (252–253 (RG)) interacts with NADPH.

The protein belongs to the GTP cyclohydrolase I family. QueF type 2 subfamily. Homodimer.

It localises to the cytoplasm. The enzyme catalyses 7-aminomethyl-7-carbaguanine + 2 NADP(+) = 7-cyano-7-deazaguanine + 2 NADPH + 3 H(+). Its pathway is tRNA modification; tRNA-queuosine biosynthesis. Its function is as follows. Catalyzes the NADPH-dependent reduction of 7-cyano-7-deazaguanine (preQ0) to 7-aminomethyl-7-deazaguanine (preQ1). The chain is NADPH-dependent 7-cyano-7-deazaguanine reductase from Ralstonia nicotianae (strain ATCC BAA-1114 / GMI1000) (Ralstonia solanacearum).